A 142-amino-acid chain; its full sequence is Hemoglobin subunit alpha-1 (142 aa).

One can recognise a Globin domain in the interval Lys2–Arg142. His59 is an O2 binding site. His88 is a binding site for heme b.

It belongs to the globin family. As to quaternary structure, major hemoglobin is a heterotetramer of two alpha-1 chains and two beta-1 chains. As to expression, red blood cells.

Its function is as follows. Involved in oxygen transport from the lung to the various peripheral tissues. This chain is Hemoglobin subunit alpha-1, found in Pleurodeles waltl (Iberian ribbed newt).